The primary structure comprises 408 residues: Argininosuccinate synthase (408 aa).

Residues 10 to 18 (AYSGGLDTS) and Ala-37 each bind ATP. The L-citrulline site is built by Tyr-90 and Ser-95. ATP is bound at residue Gly-120. L-aspartate contacts are provided by Thr-122, Asn-126, and Asp-127. Asn-126 serves as a coordination point for L-citrulline. Positions 130, 181, 190, 266, and 278 each coordinate L-citrulline.

It belongs to the argininosuccinate synthase family. Type 1 subfamily. Homotetramer.

Its subcellular location is the cytoplasm. The enzyme catalyses L-citrulline + L-aspartate + ATP = 2-(N(omega)-L-arginino)succinate + AMP + diphosphate + H(+). It participates in amino-acid biosynthesis; L-arginine biosynthesis; L-arginine from L-ornithine and carbamoyl phosphate: step 2/3. The chain is Argininosuccinate synthase from Laribacter hongkongensis (strain HLHK9).